A 240-amino-acid chain; its full sequence is Uridylate kinase (240 aa).

Residues 15–18, Gly58, and Arg62 each bind ATP; that span reads KISG. UMP-binding positions include Asp77 and 138 to 145; that span reads TGNPLFTT. Thr165, Tyr171, and Asp174 together coordinate ATP.

This sequence belongs to the UMP kinase family. In terms of assembly, homohexamer.

It localises to the cytoplasm. The enzyme catalyses UMP + ATP = UDP + ADP. It participates in pyrimidine metabolism; CTP biosynthesis via de novo pathway; UDP from UMP (UMPK route): step 1/1. Its activity is regulated as follows. Inhibited by UTP. Functionally, catalyzes the reversible phosphorylation of UMP to UDP. The chain is Uridylate kinase from Buchnera aphidicola subsp. Schizaphis graminum (strain Sg).